The primary structure comprises 726 residues: Catalase-peroxidase (726 aa).

Positions 1-33 (MSTTDDTHNTLSTGKCPFHQGGHDRSAGAGTAS) are disordered. Residues 105–226 (WHGAGTYRSI…LGATEMGLIY (122 aa)) constitute a cross-link (tryptophyl-tyrosyl-methioninium (Trp-Tyr) (with M-252)). Histidine 106 acts as the Proton acceptor in catalysis. Positions 226–252 (YVNPEGPDHSGEPLSAAAAIRATFGNM) form a cross-link, tryptophyl-tyrosyl-methioninium (Tyr-Met) (with W-105). Residue histidine 267 participates in heme b binding.

The protein belongs to the peroxidase family. Peroxidase/catalase subfamily. In terms of assembly, homodimer or homotetramer. Requires heme b as cofactor. Formation of the three residue Trp-Tyr-Met cross-link is important for the catalase, but not the peroxidase activity of the enzyme.

It carries out the reaction H2O2 + AH2 = A + 2 H2O. It catalyses the reaction 2 H2O2 = O2 + 2 H2O. Functionally, bifunctional enzyme with both catalase and broad-spectrum peroxidase activity. This is Catalase-peroxidase from Salmonella schwarzengrund (strain CVM19633).